A 414-amino-acid chain; its full sequence is CinA-like protein (414 aa).

The protein belongs to the CinA family.

In Geobacter sp. (strain M21), this protein is CinA-like protein.